The following is a 594-amino-acid chain: Spermidine/putrescine import ATP-binding protein PotA (594 aa).

The 412-residue stretch at 24-435 folds into the ABC transporter domain; it reads IEIKKINKTY…PANNWVANFI (412 aa). Position 57–64 (57–64) interacts with ATP; it reads GPSGCGKT. Positions 125 to 304 are insert; the sequence is RKPIENVSAD…EWFDKKKLTR (180 aa).

It belongs to the ABC transporter superfamily. Spermidine/putrescine importer (TC 3.A.1.11.1) family. In terms of assembly, the complex is composed of two ATP-binding proteins (PotA), two transmembrane proteins (PotB and PotC) and a solute-binding protein (PotD).

It is found in the cell membrane. The enzyme catalyses ATP + H2O + polyamine-[polyamine-binding protein]Side 1 = ADP + phosphate + polyamineSide 2 + [polyamine-binding protein]Side 1.. Functionally, part of the ABC transporter complex PotABCD involved in spermidine/putrescine import. Responsible for energy coupling to the transport system. The polypeptide is Spermidine/putrescine import ATP-binding protein PotA (Malacoplasma penetrans (strain HF-2) (Mycoplasma penetrans)).